We begin with the raw amino-acid sequence, 392 residues long: Esterase EstB (392 aa).

Catalysis depends on serine 75, which acts as the Acyl-ester intermediate.

This sequence belongs to the class-A beta-lactamase family.

Its subcellular location is the cytoplasm. With respect to regulation, strongly inhibited by eserin, NaF, HgCl2, SDS and Triton X-100. In terms of biological role, acts on short-chain (C4-C6) fatty acid esters and triglycerides, including tertiary alcohol esters. Activity on p-nitrophenyl esters is generally higher than on o-nitrophenyl esters. Lacks beta-lactamase activity; it hydrolyzes the ester bond of cephalosporin substrates but there is no opening of the beta-lactam ring observed. The sequence is that of Esterase EstB (estB) from Burkholderia gladioli (Pseudomonas marginata).